We begin with the raw amino-acid sequence, 201 residues long: Dephospho-CoA kinase (201 aa).

Positions 4-201 (TIGLTGGIAS…ILKQWDALEK (198 aa)) constitute a DPCK domain. Residue 12–17 (ASGKST) participates in ATP binding.

The protein belongs to the CoaE family.

The protein resides in the cytoplasm. It carries out the reaction 3'-dephospho-CoA + ATP = ADP + CoA + H(+). The protein operates within cofactor biosynthesis; coenzyme A biosynthesis; CoA from (R)-pantothenate: step 5/5. Functionally, catalyzes the phosphorylation of the 3'-hydroxyl group of dephosphocoenzyme A to form coenzyme A. This Geobacillus kaustophilus (strain HTA426) protein is Dephospho-CoA kinase.